The primary structure comprises 52 residues: Ornatin-C (52 aa).

The Cell attachment site signature appears at 42–44 (RGD).

The protein belongs to the ornatin family.

The protein localises to the secreted. In terms of biological role, potent inhibitor of fibrinogen interaction with platelet receptors expressed on glycoprotein IIb-IIIa complex. May prevent blood from clotting during either feeding and/or storage of ingested blood. This chain is Ornatin-C, found in Placobdella ornata (Turtle leech).